We begin with the raw amino-acid sequence, 424 residues long: Histidinol dehydrogenase homolog (424 aa).

Zn(2+) contacts are provided by Gln-250 and His-253. Active-site proton acceptor residues include Glu-318 and His-319. Asp-352 and His-411 together coordinate Zn(2+).

The protein belongs to the histidinol dehydrogenase family. Zn(2+) is required as a cofactor.

In Shouchella clausii (strain KSM-K16) (Alkalihalobacillus clausii), this protein is Histidinol dehydrogenase homolog.